Here is a 572-residue protein sequence, read N- to C-terminus: Moesin/ezrin/radixin homolog 1 (572 aa).

The FERM domain maps to 1 to 291 (MNVRVTTMDA…GNHELYMRRR (291 aa)). The interval 456-491 (TTTPSHHHVEEEEEMDNEEELVNGENGNQDFSKDFD) is disordered. A compositionally biased stretch (acidic residues) spans 466 to 477 (EEEEMDNEEELV). T553 carries the post-translational modification Phosphothreonine.

Interacts with cytoskeletal actin.

The protein resides in the cell junction. The protein localises to the adherens junction. It localises to the cell projection. It is found in the microvillus. Its subcellular location is the rhabdomere. The protein resides in the cell membrane. The protein localises to the cytoplasm. It localises to the cytoskeleton. Involved in connections of major cytoskeletal structures to the plasma membrane. The chain is Moesin/ezrin/radixin homolog 1 from Culex quinquefasciatus (Southern house mosquito).